The primary structure comprises 275 residues: Release factor glutamine methyltransferase (275 aa).

Residues 114–118, aspartate 137, tryptophan 165, and asparagine 180 contribute to the S-adenosyl-L-methionine site; that span reads GTGSG. Residue 180-183 coordinates substrate; sequence NPPY.

The protein belongs to the protein N5-glutamine methyltransferase family. PrmC subfamily.

It catalyses the reaction L-glutaminyl-[peptide chain release factor] + S-adenosyl-L-methionine = N(5)-methyl-L-glutaminyl-[peptide chain release factor] + S-adenosyl-L-homocysteine + H(+). Its function is as follows. Methylates the class 1 translation termination release factors RF1/PrfA and RF2/PrfB on the glutamine residue of the universally conserved GGQ motif. The sequence is that of Release factor glutamine methyltransferase from Xylella fastidiosa (strain Temecula1 / ATCC 700964).